The chain runs to 261 residues: Epidermal growth factor-binding protein type B (261 aa).

An N-terminal signal peptide occupies residues 1–16; sequence MWFLILFLALSLGGID. The propeptide at 17-24 is activation peptide; it reads AAPPLQSR. The Peptidase S1 domain occupies 25–258; that stretch reads VVGGFNCKKN…FNSWIKDTMM (234 aa). Disulfide bonds link Cys-31/Cys-173, Cys-50/Cys-66, Cys-152/Cys-219, Cys-184/Cys-198, and Cys-209/Cys-234. His-65 (charge relay system) is an active-site residue. Asn-102 carries N-linked (GlcNAc...) asparagine glycosylation. Catalysis depends on Asp-120, which acts as the Charge relay system. The active-site Charge relay system is the Ser-213.

This sequence belongs to the peptidase S1 family. Kallikrein subfamily.

It catalyses the reaction Hydrolyzes mouse Ren2 protein (a species of prorenin present in the submandibular gland) on the carboxy side of the arginine residue at the Lys-Arg-|- pair in the N-terminus, to yield mature renin.. In terms of biological role, cleaves REN2 at a dibasic site to yield mature renin. This chain is Epidermal growth factor-binding protein type B (Egfbp2), found in Mus musculus (Mouse).